We begin with the raw amino-acid sequence, 854 residues long: DNA topoisomerase 1 type prokaryotic (854 aa).

Residues 2-110 (SILILLESPG…KRLRFNAITK (109 aa)) form the Toprim domain. 2 residues coordinate Mg(2+): Glu8 and Asp79. Residues 124-610 (DKNLVDAQKA…DFYDKLKPIV (487 aa)) form the Topo IA-type catalytic domain. The tract at residues 158–163 (SAGRVQ) is interaction with DNA. Tyr302 serves as the catalytic O-(5'-phospho-DNA)-tyrosine intermediate. The interval 802–854 (KSAPKGGSKTIRKPSQTKYSQTKSTKSTKSTKSTNKKFVGKSAKKTTKKTTKK) is disordered. Low complexity predominate over residues 814–834 (KPSQTKYSQTKSTKSTKSTKS). The span at 835 to 854 (TNKKFVGKSAKKTTKKTTKK) shows a compositional bias: basic residues.

The protein belongs to the type IA topoisomerase family. Mg(2+) serves as cofactor.

The protein resides in the virion. It carries out the reaction ATP-independent breakage of single-stranded DNA, followed by passage and rejoining.. In terms of biological role, releases the supercoiling and torsional tension of DNA, which is introduced during the DNA replication and transcription, by transiently cleaving and rejoining one strand of the DNA duplex. Introduces a single-strand break via transesterification at a target site in duplex DNA. The scissile phosphodiester is attacked by the catalytic tyrosine of the enzyme, resulting in the formation of a DNA-(5'-phosphotyrosyl)-enzyme intermediate and the expulsion of a 3'-OH DNA strand. The free DNA strand then undergoes passage around the unbroken strand, thus removing DNA supercoils. Finally, in the religation step, the DNA 3'-OH attacks the covalent intermediate to expel the active-site tyrosine and restore the DNA phosphodiester backbone. This is DNA topoisomerase 1 type prokaryotic (TOP1P) from Acanthamoeba polyphaga (Amoeba).